Reading from the N-terminus, the 154-residue chain is MGLSDGEWQSVLNVWGKVEADLAGHGQEILIRLFTAHPETLEKFDKFKNLKTPDEMKASEDLKKHGVTVLTALGGILKKKGHHEAEIKPLAQSHATKHKIPVKYLEFISEAIIHVLQSKHPGDFGADAQGAMNKALELFRNDIAAKYKELGFQG.

One can recognise a Globin domain in the interval 2–148 (GLSDGEWQSV…FRNDIAAKYK (147 aa)). S4 bears the Phosphoserine mark. Position 65 (H65) interacts with nitrite. H65 is a binding site for O2. T68 is modified (phosphothreonine). Residue H94 coordinates heme b.

This sequence belongs to the globin family. Monomeric.

The protein resides in the cytoplasm. It localises to the sarcoplasm. It carries out the reaction Fe(III)-heme b-[protein] + nitric oxide + H2O = Fe(II)-heme b-[protein] + nitrite + 2 H(+). The catalysed reaction is H2O2 + AH2 = A + 2 H2O. In terms of biological role, monomeric heme protein which primary function is to store oxygen and facilitate its diffusion within muscle tissues. Reversibly binds oxygen through a pentacoordinated heme iron and enables its timely and efficient release as needed during periods of heightened demand. Depending on the oxidative conditions of tissues and cells, and in addition to its ability to bind oxygen, it also has a nitrite reductase activity whereby it regulates the production of bioactive nitric oxide. Under stress conditions, like hypoxia and anoxia, it also protects cells against reactive oxygen species thanks to its pseudoperoxidase activity. The sequence is that of Myoglobin (MB) from Perodicticus potto edwarsi (Potto).